Consider the following 285-residue polypeptide: Eukaryotic translation initiation factor 2 subunit beta (285 aa).

A disordered region spans residues 30–69; that stretch reads DAAVNGKENGSGDDLFAGLKKKKKKSKSVSADAEAEKEPT. Phosphoserine is present on S40. The residue at position 69 (T69) is a Phosphothreonine. Phosphoserine occurs at positions 80, 92, and 112. T116 bears the Phosphothreonine mark. S118 carries the post-translational modification Phosphoserine. The C4-type zinc-finger motif lies at 236-262; the sequence is CKTCKSINTELKREQSNRLFFMVCKSC.

It belongs to the eIF-2-beta/eIF-5 family. As to quaternary structure, eukaryotic translation initiation factor 2 eIF2 is a heterotrimeric complex composed of an alpha, a beta and a gamma subunit. The factors eIF-1, eIF-2, eIF-3, TIF5/eIF-5 and methionyl-tRNAi form a multifactor complex (MFC) that may bind to the 40S ribosome. Interacts with GCD6. Interacts with GCD1. Interacts with TIF5/eIF-5. Interacts with CDC123.

Its subcellular location is the cytoplasm. It is found in the cytosol. In terms of biological role, component of the eIF2 complex that functions in the early steps of protein synthesis by forming a ternary complex with GTP and initiator tRNA. This complex binds to a 40S ribosomal subunit, followed by mRNA binding to form a 43S pre-initiation complex (43S PIC). Junction of the 60S ribosomal subunit to form the 80S initiation complex is preceded by hydrolysis of the GTP bound to eIF2 and release of an eIF2-GDP binary complex. In order for eIF2 to recycle and catalyze another round of initiation, the GDP bound to eIF2 must exchange with GTP by way of a reaction catalyzed by eIF2B. The chain is Eukaryotic translation initiation factor 2 subunit beta (SUI3) from Saccharomyces cerevisiae (strain ATCC 204508 / S288c) (Baker's yeast).